A 171-amino-acid polypeptide reads, in one-letter code: Putative charged multivesicular body protein 4B-like protein CHMP4BP1 (171 aa).

A compositionally biased stretch (basic and acidic residues) spans 1–17 (MLSKKQEFLEKKIEQRH). 2 disordered regions span residues 1–24 (MLSK…NKPA) and 132–171 (EQEE…KTTT).

This sequence belongs to the SNF7 family.

The protein is Putative charged multivesicular body protein 4B-like protein CHMP4BP1 (CHMP4BP1) of Homo sapiens (Human).